Consider the following 407-residue polypeptide: 45 kDa calcium-binding protein (407 aa).

The first 35 residues, 1-35, serve as a signal peptide directing secretion; sequence MVWSWVAMASRWGPLVGLAPRCLWLLGAVLLMDAS. The N-linked (GlcNAc...) asparagine glycan is linked to Asn40. 2 consecutive EF-hand domains span residues 98–133 and 137–172; these read RSRR…KTAE and EAME…SKGH. Ser99 is subject to Phosphoserine. Residues Asp111, Asn113, Asp115, Lys117, Glu122, Asp150, Asp152, Asp154, His156, and Glu161 each coordinate Ca(2+). Residues Thr193 and Thr217 each carry the phosphothreonine modification. A compositionally biased stretch (low complexity) spans 249–259; that stretch reads GSSLAGAPGPG. Residues 249-282 are disordered; the sequence is GSSLAGAPGPGDQRQGPGIAGKSGKVLREPQPGC. Ca(2+) is bound by residues Asp291, Asp293, Asp295, Gln297, and Glu302. EF-hand domains are found at residues 291–313, 323–358, and 359–394; these read DQDG…TVEN, WVKD…MNEY, and NALN…FTGS. Thr310 carries the phosphothreonine modification. 3 residues coordinate Ca(2+): Asp336, Asn338, and Asp340. Thr344 is modified (phosphothreonine). Positions 347, 372, 374, 376, 378, and 383 each coordinate Ca(2+). Residues 354 to 407 form a necessary for intracellular retention in Golgi apparatus lumen region; it reads PMNEYNALNEAKQMIAVADENQNHHLEPEEVLKYSEFFTGSKLVDYARSVHEEF.

Belongs to the CREC family.

It localises to the golgi apparatus lumen. Its function is as follows. May regulate calcium-dependent activities in the endoplasmic reticulum lumen or post-ER compartment. This chain is 45 kDa calcium-binding protein (SDF4), found in Macaca fascicularis (Crab-eating macaque).